Here is a 115-residue protein sequence, read N- to C-terminus: NADH-ubiquinone oxidoreductase chain 3 (115 aa).

3 consecutive transmembrane segments (helical) span residues 1 to 21 (MITL…LLII), 55 to 75 (FFLV…LFPL), and 87 to 107 (AIIL…YEWL).

Belongs to the complex I subunit 3 family.

It localises to the mitochondrion membrane. The catalysed reaction is a ubiquinone + NADH + 5 H(+)(in) = a ubiquinol + NAD(+) + 4 H(+)(out). Its function is as follows. Core subunit of the mitochondrial membrane respiratory chain NADH dehydrogenase (Complex I) that is believed to belong to the minimal assembly required for catalysis. Complex I functions in the transfer of electrons from NADH to the respiratory chain. The immediate electron acceptor for the enzyme is believed to be ubiquinone. The protein is NADH-ubiquinone oxidoreductase chain 3 (MT-ND3) of Myxine glutinosa (Atlantic hagfish).